We begin with the raw amino-acid sequence, 710 residues long: Polyribonucleotide nucleotidyltransferase (710 aa).

2 residues coordinate Mg(2+): Asp-489 and Asp-495. The KH domain occupies 556-615 (PKIDTIKIDVDKIKVVIGKGGETIDKIIAETGVKIDIDDEGNVSIYSSDQAAIDRTKEII). The region spanning 625–693 (GEVYHAKVIR…EKGRVDASMK (69 aa)) is the S1 motif domain. The segment at 691–710 (SMKALIPRPPKPEKKEEKHD) is disordered. Over residues 700–710 (PKPEKKEEKHD) the composition is skewed to basic and acidic residues.

Belongs to the polyribonucleotide nucleotidyltransferase family. The cofactor is Mg(2+).

The protein localises to the cytoplasm. It catalyses the reaction RNA(n+1) + phosphate = RNA(n) + a ribonucleoside 5'-diphosphate. In terms of biological role, involved in mRNA degradation. Catalyzes the phosphorolysis of single-stranded polyribonucleotides processively in the 3'- to 5'-direction. This Streptococcus pyogenes serotype M18 (strain MGAS8232) protein is Polyribonucleotide nucleotidyltransferase.